A 250-amino-acid chain; its full sequence is Probable phosphatase VIBHAR_04983 (250 aa).

H8, H10, H16, H41, E74, H102, H132, D194, and H196 together coordinate Zn(2+).

The protein belongs to the PHP family. The cofactor is Zn(2+).

The polypeptide is Probable phosphatase VIBHAR_04983 (Vibrio campbellii (strain ATCC BAA-1116)).